A 64-amino-acid polypeptide reads, in one-letter code: MMFKLGVLLTICLLLFPLTALQLDWDQPGDHMLDISSEIDDRWFDPVRKCCMRPICMCPCCIGP.

The signal sequence occupies residues 1 to 20 (MMFKLGVLLTICLLLFPLTA). Residues 21 to 48 (LQLDWDQPGDHMLDISSEIDDRWFDPVR) constitute a propeptide that is removed on maturation. Disulfide bonds link cysteine 50-cysteine 60, cysteine 51-cysteine 58, and cysteine 56-cysteine 61. 4-hydroxyproline is present on proline 59.

As to expression, expressed by the venom duct.

The protein localises to the secreted. The sequence is that of Conotoxin reg3k from Conus regius (Crown cone).